The chain runs to 1455 residues: MSDSWVPNSASGQDPGGRRRAWAELLAGRVKREKYNPERAQKLKESAVRLLRSHQDLNALLLEVEGPLCKKLSLSKVIDCDSSEAYANHSSSFIGSALQDQASRLGVPVGILSAGMVASSVGQICTAPAETSHPVLLTVEQRKKLSSLLEFAQYLLAHSMFSRLSFCQELWKIQSSLLLEAVWHLHVQGIVSLQELLESHPDMHAVGSWLFRNLCCLCEQMEASCQHADVARAMLSDFVQMFVLRGFQKNSDLRRTVEPEKMPQVTVDVLQRMLIFALDALAAGVQEESSTHKIVRCWFGVFSGHTLGSVISTDPLKRFFSHTLTQILTHSPVLKASDAVQMQREWSFARTHPLLTSLYRRLFVMLSAEELVGHLQEVLETQEVHWQRVLSFVSALVVCFPEAQQLLEDWVARLMAQAFESCQLDSMVTAFLVVRQAALEGPSAFLSYADWFKASFGSTRGYHGCSKKALVFLFTFLSELVPFESPRYLQVHILHPPLVPGKYRSLLTDYISLAKTRLADLKVSIENMGLYEDLSSAGDITEPHSQALQDVEKAIMVFEHTGNIPVTVMEASIFRRPYYVSHFLPALLTPRVLPKVPDSRVAFIESLKRADKIPPSLYSTYCQACSAAEEKPEDAALGVRAEPNSAEEPLGQLTAALGELRASMTDPSQRDVISAQVAVISERLRAVLGHNEDDSSVEISKIQLSINTPRLEPREHMAVDLLLTSFCQNLMAASSVAPPERQGPWAALFVRTMCGRVLPAVLTRLCQLLRHQGPSLSAPHVLGLAALAVHLGESRSALPEVDVGPPAPGAGLPVPALFDSLLTCRTRDSLFFCLKFCTAAISYSLCKFSSQSRDTLCSCLSPGLIKKFQFLMFRLFSEARQPLSEEDVASLSWRPLHLPSADWQRAALSLWTHRTFREVLKEEDVHLTYQDWLHLELEIQPEADALSDTERQDFHQWAIHEHFLPESSASGGCDGDLQAACTILVNALMDFHQSSRSYDHSENSDLVFGGRTGNEDIISRLQEMVADLELQQDLIVPLGHTPSQEHFLFEIFRRRLQALTSGWSVAASLQRQRELLMYKRILLRLPSSVLCGSSFQAEQPITARCEQFFHLVNSEMRNFCSHGGALTQDITAHFFRGLLNACLRSRDPSLMVDFILAKCQTKCPLILTSALVWWPSLEPVLLCRWRRHCQSPLPRELQKLQEGRQFASDFLSPEAASPAPNPDWLSAAALHFAIQQVREENIRKQLKKLDCEREELLVFLFFFSLMGLLSSHLTSNSTTDLPKAFHVCAAILECLEKRKISWLALFQLTESDLRLGRLLLRVAPDQHTRLLPFAFYSLLSYFHEDAAIREEAFLHVAVDMYLKLVQLFVAGDTSTVSPPAGRSLELKGQGNPVELITKARLFLLQLIPRCPKKSFSHVAELLADRGDCDPEVSAALQSRQQAAPDADLSQEPHLF.

The short motif at 18–34 is the Nuclear localization signal element; the sequence is RRRAWAELLAGRVKREK. S1449 is subject to Phosphoserine.

In terms of assembly, belongs to the multisubunit FA complex composed of FANCA, FANCB, FANCC, FANCE, FANCF, FANCG, FANCL/PHF9 and FANCM. The complex is not found in FA patients. In complex with FANCF, FANCG and FANCL, but not with FANCC, nor FANCE, interacts with HES1; this interaction may be essential for the stability and nuclear localization of FA core complex proteins. The complex with FANCC and FANCG may also include EIF2AK2 and HSP70. Interacts with FAAP20/C1orf86; interaction is direct. In terms of processing, phosphorylation is required for the formation of the nuclear complex. Not phosphorylated in cells derived from groups A, B, C, E, F, G, and H.

It localises to the nucleus. Its subcellular location is the cytoplasm. Functionally, DNA repair protein that may operate in a postreplication repair or a cell cycle checkpoint function. May be involved in interstrand DNA cross-link repair and in the maintenance of normal chromosome stability. This chain is Fanconi anemia group A protein (FANCA), found in Homo sapiens (Human).